The sequence spans 132 residues: Mite allergen Der p 5 (132 aa).

2 immunodominant conformational IgE-binding epitope regions span residues 25–53 and 102–132; these read DYQNEFDFLLMERIHEQIKKGELALFYLQ and EQYNLEMAKKSGDILERDLKKEEARVKKIEV.

This sequence belongs to the mite group 5 allergen family. Monomer. Trimer of homodimers. Oligomerizes in a concentration-dependent manner.

The chain is Mite allergen Der p 5 (DERP5) from Dermatophagoides pteronyssinus (European house dust mite).